Reading from the N-terminus, the 594-residue chain is Fidgetin-like protein 1 (594 aa).

2 disordered regions span residues 1 to 79 (MYSP…DDEL) and 239 to 261 (QSIG…KRCS). Residues 56-73 (PSDSAQQQPPFKSRSQQN) show a composition bias toward polar residues. Residues alanine 319 and 359–364 (GTGKTM) each bind ATP.

It belongs to the AAA ATPase family. In terms of assembly, hexamer. Mg(2+) is required as a cofactor. In terms of tissue distribution, expressed in germ cells.

It is found in the nucleus. The catalysed reaction is ATP + H2O = ADP + phosphate + H(+). Its function is as follows. Has a role in spindle assembly which acts in the progression through mitosis during embryogenesis. Required for fertility. In Caenorhabditis elegans, this protein is Fidgetin-like protein 1 (figl-1).